A 681-amino-acid chain; its full sequence is Minichromosome maintenance domain-containing protein 2 (681 aa).

The residue at position 292 (Ser-292) is a Phosphoserine. Positions 533 to 621 (KQFTTEDFEK…LIAALLFEIS (89 aa)) constitute an MCM domain.

Its function is as follows. Plays an important role in meiotic recombination and associated DNA double-strand break repair. The sequence is that of Minichromosome maintenance domain-containing protein 2 (Mcmdc2) from Rattus norvegicus (Rat).